The chain runs to 185 residues: Gastrokine-1 (185 aa).

The signal sequence occupies residues 1–20; sequence MKFTIAFAGLLGVFLTPALA. The region spanning 54 to 150 is the BRICHOS domain; sequence NNGWNSWNAL…MCKGIPTYMA (97 aa). Cysteine 81 and cysteine 142 are oxidised to a cystine.

This sequence belongs to the gastrokine family. In terms of tissue distribution, highly expressed specifically in surface cells of the antrum mucosa from where it is secreted.

It localises to the secreted. The protein localises to the cytoplasmic granule. It is found in the golgi apparatus. Its function is as follows. Has mitogenic activity and may be involved in maintaining the integrity of the gastric mucosal epithelium. The chain is Gastrokine-1 (GKN1) from Sus scrofa (Pig).